Consider the following 690-residue polypeptide: Elongation factor G (690 aa).

The tr-type G domain occupies 8–283; the sequence is EDYRNFGIMA…AVVDYLPSPV (276 aa). GTP-binding positions include 17 to 24, 81 to 85, and 135 to 138; these read AHIDAGKT, DTPGH, and NKMD.

This sequence belongs to the TRAFAC class translation factor GTPase superfamily. Classic translation factor GTPase family. EF-G/EF-2 subfamily.

The protein localises to the cytoplasm. Its function is as follows. Catalyzes the GTP-dependent ribosomal translocation step during translation elongation. During this step, the ribosome changes from the pre-translocational (PRE) to the post-translocational (POST) state as the newly formed A-site-bound peptidyl-tRNA and P-site-bound deacylated tRNA move to the P and E sites, respectively. Catalyzes the coordinated movement of the two tRNA molecules, the mRNA and conformational changes in the ribosome. The protein is Elongation factor G of Rhodopseudomonas palustris (strain BisB5).